The primary structure comprises 179 residues: MSVMDALFLLATEEVGHFGINTNLLETNVINLAILIGVLVYFGRGVLGKTLGDRQKQIATAIAEAEERQKVAAARLAEAQQKLTQAKQEAQRIREDALTRAKAVKEEIIAQAKREIERLQETASQDTSAATERAIAEIRERIAAMALAEAENQLKARLSQNPDLQRTLIDRSIALLGGK.

A helical transmembrane segment spans residues 29 to 48 (VINLAILIGVLVYFGRGVLG).

The protein belongs to the ATPase B chain family. F-type ATPases have 2 components, F(1) - the catalytic core - and F(0) - the membrane proton channel. F(1) has five subunits: alpha(3), beta(3), gamma(1), delta(1), epsilon(1). F(0) has four main subunits: a(1), b(1), b'(1) and c(10-14). The alpha and beta chains form an alternating ring which encloses part of the gamma chain. F(1) is attached to F(0) by a central stalk formed by the gamma and epsilon chains, while a peripheral stalk is formed by the delta, b and b' chains.

It is found in the cellular thylakoid membrane. Its function is as follows. F(1)F(0) ATP synthase produces ATP from ADP in the presence of a proton or sodium gradient. F-type ATPases consist of two structural domains, F(1) containing the extramembraneous catalytic core and F(0) containing the membrane proton channel, linked together by a central stalk and a peripheral stalk. During catalysis, ATP synthesis in the catalytic domain of F(1) is coupled via a rotary mechanism of the central stalk subunits to proton translocation. Functionally, component of the F(0) channel, it forms part of the peripheral stalk, linking F(1) to F(0). In terms of biological role, the complex from the organism is particularly stable to disruption and remains functional after 6 hrs at 55 degrees Celsius. In Thermosynechococcus vestitus (strain NIES-2133 / IAM M-273 / BP-1), this protein is ATP synthase subunit b.